The following is a 565-amino-acid chain: Proline--tRNA ligase (565 aa).

It belongs to the class-II aminoacyl-tRNA synthetase family. ProS type 1 subfamily. Homodimer.

The protein localises to the cytoplasm. It carries out the reaction tRNA(Pro) + L-proline + ATP = L-prolyl-tRNA(Pro) + AMP + diphosphate. Its function is as follows. Catalyzes the attachment of proline to tRNA(Pro) in a two-step reaction: proline is first activated by ATP to form Pro-AMP and then transferred to the acceptor end of tRNA(Pro). As ProRS can inadvertently accommodate and process non-cognate amino acids such as alanine and cysteine, to avoid such errors it has two additional distinct editing activities against alanine. One activity is designated as 'pretransfer' editing and involves the tRNA(Pro)-independent hydrolysis of activated Ala-AMP. The other activity is designated 'posttransfer' editing and involves deacylation of mischarged Ala-tRNA(Pro). The misacylated Cys-tRNA(Pro) is not edited by ProRS. This Hydrogenobaculum sp. (strain Y04AAS1) protein is Proline--tRNA ligase.